Here is a 210-residue protein sequence, read N- to C-terminus: 3 beta-hydroxysteroid dehydrogenase/Delta 5--&gt;4-isomerase (210 aa).

Tyr-29 serves as the catalytic Proton acceptor. NAD(+) is bound at residue Lys-33.

Belongs to the 3-beta-HSD family.

The catalysed reaction is a 3beta-hydroxy-Delta(5)-steroid + NAD(+) = a 3-oxo-Delta(5)-steroid + NADH + H(+). The enzyme catalyses a 3-oxo-Delta(5)-steroid = a 3-oxo-Delta(4)-steroid. The protein operates within lipid metabolism; steroid biosynthesis. Its function is as follows. Catalyzes the oxidative conversion of Delta(5)-ene-3-beta-hydroxy steroid, and the oxidative conversion of ketosteroids. The 3-beta-HSD enzymatic system plays a crucial role in the biosynthesis of all classes of hormonal steroids. During viral infection, steroid production contributes to virulence by inhibiting the host inflammatory response. The protein is 3 beta-hydroxysteroid dehydrogenase/Delta 5--&gt;4-isomerase (OPG174) of Variola virus (isolate Human/India/Ind3/1967) (VARV).